A 231-amino-acid chain; its full sequence is Biosynthetic peptidoglycan transglycosylase (231 aa).

The helical transmembrane segment at 12–32 threads the bilayer; the sequence is LLAAFALLLLWQVWLFAQVAW.

This sequence belongs to the glycosyltransferase 51 family.

It localises to the cell inner membrane. It catalyses the reaction [GlcNAc-(1-&gt;4)-Mur2Ac(oyl-L-Ala-gamma-D-Glu-L-Lys-D-Ala-D-Ala)](n)-di-trans,octa-cis-undecaprenyl diphosphate + beta-D-GlcNAc-(1-&gt;4)-Mur2Ac(oyl-L-Ala-gamma-D-Glu-L-Lys-D-Ala-D-Ala)-di-trans,octa-cis-undecaprenyl diphosphate = [GlcNAc-(1-&gt;4)-Mur2Ac(oyl-L-Ala-gamma-D-Glu-L-Lys-D-Ala-D-Ala)](n+1)-di-trans,octa-cis-undecaprenyl diphosphate + di-trans,octa-cis-undecaprenyl diphosphate + H(+). The protein operates within cell wall biogenesis; peptidoglycan biosynthesis. Peptidoglycan polymerase that catalyzes glycan chain elongation from lipid-linked precursors. The protein is Biosynthetic peptidoglycan transglycosylase of Azoarcus sp. (strain BH72).